Consider the following 287-residue polypeptide: Bifunctional protein FolD (287 aa).

NADP(+) is bound by residues 165 to 167 (NRS), serine 190, and isoleucine 233.

The protein belongs to the tetrahydrofolate dehydrogenase/cyclohydrolase family. In terms of assembly, homodimer.

The enzyme catalyses (6R)-5,10-methylene-5,6,7,8-tetrahydrofolate + NADP(+) = (6R)-5,10-methenyltetrahydrofolate + NADPH. It carries out the reaction (6R)-5,10-methenyltetrahydrofolate + H2O = (6R)-10-formyltetrahydrofolate + H(+). The protein operates within one-carbon metabolism; tetrahydrofolate interconversion. In terms of biological role, catalyzes the oxidation of 5,10-methylenetetrahydrofolate to 5,10-methenyltetrahydrofolate and then the hydrolysis of 5,10-methenyltetrahydrofolate to 10-formyltetrahydrofolate. The chain is Bifunctional protein FolD from Nitrosopumilus maritimus (strain SCM1).